A 144-amino-acid chain; its full sequence is Small ribosomal subunit protein bS6 (144 aa).

Residues 97–144 are disordered; sequence DTEQSLIMKSKDEKGDKPERSERRRRDDEEGDAAPAATDTDGDNAEAA. Over residues 105-124 the composition is skewed to basic and acidic residues; sequence KSKDEKGDKPERSERRRRDD.

The protein belongs to the bacterial ribosomal protein bS6 family.

Functionally, binds together with bS18 to 16S ribosomal RNA. The sequence is that of Small ribosomal subunit protein bS6 from Xanthomonas campestris pv. campestris (strain 8004).